A 1188-amino-acid chain; its full sequence is Meiotically up-regulated gene 190 protein (1188 aa).

Over residues 1 to 11 (MSTHSGDSTKQ) the composition is skewed to polar residues. Disordered regions lie at residues 1–61 (MSTH…DPIT) and 83–125 (FTVP…EADN). The span at 41-61 (EKKEEQQREQTENEKLFDPIT) shows a compositional bias: basic and acidic residues. Positions 84-112 (TVPNQSIQGSSLPSEKPYLSSNQPTNVYK) are enriched in polar residues. The helical transmembrane segment at 173-193 (LVISWFFTHSIIISAVLPLAI) threads the bilayer. The SMP-LTD domain maps to 228-453 (IPESAEWMNH…SPKSMTIDLS (226 aa)). The disordered stretch occupies residues 298–318 (ASESFSEKQASEAEHKDEPEQ). Basic and acidic residues predominate over residues 302–318 (FSEKQASEAEHKDEPEQ). 2 C2 domains span residues 451-576 (DLSK…ERCD) and 636-781 (KEEE…TKWY). Asp485, Asp491, Asp544, Asp546, Ser549, and Asp552 together coordinate Ca(2+). 2 disordered regions span residues 615–639 (TIPR…KEEE) and 1002–1066 (QRAS…GTMN). Ser1005 carries the phosphoserine modification. The span at 1022 to 1032 (DDSVDTEDEET) shows a compositional bias: acidic residues.

It depends on Ca(2+) as a cofactor.

The protein resides in the cytoplasm. It localises to the endoplasmic reticulum membrane. The protein localises to the nucleus membrane. Its subcellular location is the cytoskeleton. It is found in the microtubule organizing center. The protein resides in the spindle pole body. In terms of biological role, has a role in meiosis. The sequence is that of Meiotically up-regulated gene 190 protein (mug190) from Schizosaccharomyces pombe (strain 972 / ATCC 24843) (Fission yeast).